The following is a 754-amino-acid chain: Aspartyl/asparaginyl beta-hydroxylase (754 aa).

The interval 1–48 is disordered; sequence MAPRKNAKGGGGNSSSSSSGSPTGCTSGGSSSPGARRETKQGGLKNGR. The Cytoplasmic segment spans residues 1 to 56; the sequence is MAPRKNAKGGGGNSSSSSSGSPTGCTSGGSSSPGARRETKQGGLKNGRKGGLSGSS. The span at 14–34 shows a compositional bias: low complexity; the sequence is SSSSSSGSPTGCTSGGSSSPG. Residue serine 15 is modified to Phosphoserine. Residues 57–77 traverse the membrane as a helical; Signal-anchor for type II membrane protein segment; it reads FFTWFMVIALLGVWTSVAVVW. The Lumenal segment spans residues 78–754; the sequence is FDLVDYEEVL…PHQRRSLPAI (677 aa). A glycan (N-linked (GlcNAc...) asparagine) is linked at asparagine 96. Ca(2+) is bound by residues aspartate 109, aspartate 111, aspartate 113, aspartate 115, and aspartate 120. Disordered stretches follow at residues 176–197 and 247–326; these read VYSE…ELQP and EQEN…KKKK. Composition is skewed to basic and acidic residues over residues 261 to 284 and 309 to 318; these read DAER…DHAV and TNKKADEPGK. TPR repeat units follow at residues 337–370, 378–411, 450–483, 485–517, and 521–553; these read IKAE…YPQS, AQCE…PDAP, TALK…TPND, FAKV…GDPG, and GRFY…GHFA. A glycan (N-linked (GlcNAc...) asparagine) is linked at asparagine 466. Residue tryptophan 621 coordinates 2-oxoglutarate. Cysteine 637 and cysteine 644 are joined by a disulfide. Serine 664 provides a ligand contact to 2-oxoglutarate. Position 675 (histidine 675) interacts with Fe cation. Residue 684–686 coordinates 2-oxoglutarate; the sequence is RMH. Asparagine 702 carries N-linked (GlcNAc...) asparagine glycosylation. Histidine 721 is a binding site for Fe cation. 2-oxoglutarate is bound at residue arginine 731.

Belongs to the aspartyl/asparaginyl beta-hydroxylase family. In terms of assembly, monomer. Fe cation serves as cofactor. Might be processed to the 56 kDa (AA 289-754) or 52 kDa (AA 311-754) forms in the lumen of the endoplasmic reticulum.

Its subcellular location is the endoplasmic reticulum membrane. The catalysed reaction is L-aspartyl-[protein] + 2-oxoglutarate + O2 = 3-hydroxy-L-aspartyl-[protein] + succinate + CO2. Specifically hydroxylates an Asp or Asn residue in certain epidermal growth factor-like (EGF) domains of a number of proteins. This Bos taurus (Bovine) protein is Aspartyl/asparaginyl beta-hydroxylase (ASPH).